A 180-amino-acid chain; its full sequence is Aspartate 1-decarboxylase (180 aa).

The Schiff-base intermediate with substrate; via pyruvic acid role is filled by serine 24. Position 24 is a pyruvic acid (Ser) (serine 24). Threonine 56 lines the substrate pocket. The active-site Proton donor is the tyrosine 57. Substrate is bound at residue 72–74 (GAA).

Belongs to the PanD family. In terms of assembly, heterooctamer of four alpha and four beta subunits. It depends on pyruvate as a cofactor. Is synthesized initially as an inactive proenzyme, which is activated by self-cleavage at a specific serine bond to produce a beta-subunit with a hydroxyl group at its C-terminus and an alpha-subunit with a pyruvoyl group at its N-terminus.

Its subcellular location is the cytoplasm. The enzyme catalyses L-aspartate + H(+) = beta-alanine + CO2. The protein operates within cofactor biosynthesis; (R)-pantothenate biosynthesis; beta-alanine from L-aspartate: step 1/1. In terms of biological role, catalyzes the pyruvoyl-dependent decarboxylation of aspartate to produce beta-alanine. The chain is Aspartate 1-decarboxylase from Paramagnetospirillum magneticum (strain ATCC 700264 / AMB-1) (Magnetospirillum magneticum).